The primary structure comprises 337 residues: Zinc finger protein Gfi-1b (337 aa).

A mediates repression of transcription region spans residues 1–20 (MPRSFLVKSKKAHTYHQHRF). An SNAG domain region spans residues 1 to 20 (MPRSFLVKSKKAHTYHQHRF). 6 C2H2-type zinc fingers span residues 170–193 (YHCV…RRSH), 199–221 (FACE…TNIH), 227–249 (FECK…LLIH), 255–277 (YPCQ…TYIH), 283–305 (HKCQ…SRKH), and 311–334 (FSCE…ETQH).

In terms of tissue distribution, expressed in erythroid cells of primitive and definitive lineage and bone marrow cells.

It localises to the nucleus. Essential transcriptional regulator necessary for development and differentiation of erythroid and megakaryocytic lineages. Alters histone methylation by recruiting histone methyltransferase to target genes promoters. Plays a role in heterochromatin formation. This Gallus gallus (Chicken) protein is Zinc finger protein Gfi-1b (GFI1B).